The following is a 219-amino-acid chain: Probable GTP-binding protein EngB (219 aa).

The region spanning 31–205 is the EngB-type G domain; it reads VGVEIAFAGR…LSILNEWCHP (175 aa). GTP contacts are provided by residues 39–46, 66–70, 84–87, 151–154, and 184–186; these read GRSNAGKS, GRTQL, DLPG, TKSD, and FSS. The Mg(2+) site is built by Ser-46 and Thr-68.

The protein belongs to the TRAFAC class TrmE-Era-EngA-EngB-Septin-like GTPase superfamily. EngB GTPase family. The cofactor is Mg(2+).

In terms of biological role, necessary for normal cell division and for the maintenance of normal septation. The sequence is that of Probable GTP-binding protein EngB from Shewanella denitrificans (strain OS217 / ATCC BAA-1090 / DSM 15013).